Consider the following 93-residue polypeptide: U11-ctenitoxin-Pn1a (93 aa).

The signal sequence occupies residues 1-21; it reads MKCAVLFLSVIALVHIFVVEA. A propeptide spanning residues 22-34 is cleaved from the precursor; that stretch reads EEEPDSDALVPQE. Disulfide bonds link Cys-37–Cys-51, Cys-44–Cys-57, Cys-50–Cys-75, Cys-59–Cys-73, and Cys-83–Cys-90.

Belongs to the neurotoxin 09 (Tx3-6) family. Expressed by the venom gland.

The protein resides in the secreted. Functionally, probable neurotoxin. This Phoneutria nigriventer (Brazilian armed spider) protein is U11-ctenitoxin-Pn1a.